A 369-amino-acid polypeptide reads, in one-letter code: Peridinin-chlorophyll a-binding protein 2, chloroplastic (369 aa).

A chloroplast-targeting transit peptide spans 1–56 (MVRSGKKAVVLATVAFCATSVVQKTCGFVPSPLRQRAAAAGAAASVATMFAPAAFA). 2 tandem repeats follow at residues 57–219 (DEIG…VPSG) and 220–369 (DTIG…AAQR).

Homotrimer.

It localises to the plastid. The protein resides in the chloroplast. Functionally, water-soluble antenna for capture of solar energy in the blue-green range. Peridinin is an asymmetric carotenoid. The chain is Peridinin-chlorophyll a-binding protein 2, chloroplastic from Amphidinium carterae (Dinoflagellate).